Reading from the N-terminus, the 114-residue chain is Large ribosomal subunit protein P2v (114 aa).

The interval 74-114 is disordered; the sequence is VASGGGGGAAPAAEPASVESKKKEEEKEESEDDGGMMSLFD. Phosphoserine is present on serine 103.

This sequence belongs to the eukaryotic ribosomal protein P1/P2 family. As to quaternary structure, P1 and P2 exist as dimers at the large ribosomal subunit. In terms of processing, phosphorylated.

Its function is as follows. Plays an important role in the elongation step of protein synthesis. This Arabidopsis thaliana (Mouse-ear cress) protein is Large ribosomal subunit protein P2v (RPP2E).